The chain runs to 353 residues: MKGNVSELLNATQQAPGGGEGGRPRPSWLASTLAFILIFTIVVDILGNLLVILSVYRNKKLRNSGNIFVVSLAVADLVVAVYPYPLVLTSILNNGWNLGYLHCQVSAFLMGLSVIGSIFNITGIAMNRYCYICHSLKYDKIYSNKNSLCYVFLIWMLTLIAIMPNLQTGTLQYDPRIYSCTFTQSVSSAYTIAVVVFHFIVPMIIVIFCYLRIWVLVLQVRRRVKPDNKPKLKPQDFRNFVTMFVVFVLFAICWAPLNLIGLIVASDPATMVPRIPEWLFVASYYLAYFNSCLNAIIYGLLNQNFRKEYKKIIVSLCTAKMFFVESSNEEADKIKCKPSPLIPNNNLIKVDSV.

Topologically, residues Met1–Thr32 are extracellular. Residues Asn4 and Asn10 are each glycosylated (N-linked (GlcNAc...) asparagine). Residues Leu33–Leu53 form a helical membrane-spanning segment. The Cytoplasmic segment spans residues Ser54–Asn66. A helical transmembrane segment spans residues Ile67–Val87. The Extracellular segment spans residues Leu88–Val105. A disulfide bond links Cys103 and Cys180. Residues Ser106–Met126 traverse the membrane as a helical segment. At Asn127 to Lys145 the chain is on the cytoplasmic side. The helical transmembrane segment at Asn146–Leu166 threads the bilayer. Topologically, residues Gln167–Tyr190 are extracellular. The helical transmembrane segment at Thr191–Leu211 threads the bilayer. Residues Arg212 to Met243 are Cytoplasmic-facing. A helical transmembrane segment spans residues Phe244–Val264. Residues Ala265–Glu277 are Extracellular-facing. The helical transmembrane segment at Trp278 to Tyr298 threads the bilayer. Over Gly299–Val353 the chain is Cytoplasmic.

The protein belongs to the G-protein coupled receptor 1 family.

The protein resides in the cell membrane. Functionally, high affinity receptor for melatonin. Likely to mediate the reproductive and circadian actions of melatonin. The activity of this receptor is mediated by pertussis toxin sensitive G proteins that inhibit adenylate cyclase activity. Possibly involved in sleep induction, by melatonin activation of the potassium channel KCNMA1/BK and the dissociation of G-beta and G-gamma subunits, thereby decreasing synaptic transmission. This Mus musculus (Mouse) protein is Melatonin receptor type 1A (Mtnr1a).